The sequence spans 283 residues: Shikimate dehydrogenase (NADP(+)) (283 aa).

Shikimate contacts are provided by residues 16 to 18 (SLS) and T63. Residue K67 is the Proton acceptor of the active site. Position 79 (D79) interacts with NADP(+). Residues N88 and D103 each coordinate shikimate. NADP(+)-binding positions include 128–132 (GAGGA), A223, and G243.

Belongs to the shikimate dehydrogenase family. As to quaternary structure, homodimer.

The catalysed reaction is shikimate + NADP(+) = 3-dehydroshikimate + NADPH + H(+). It participates in metabolic intermediate biosynthesis; chorismate biosynthesis; chorismate from D-erythrose 4-phosphate and phosphoenolpyruvate: step 4/7. Its function is as follows. Involved in the biosynthesis of the chorismate, which leads to the biosynthesis of aromatic amino acids. Catalyzes the reversible NADPH linked reduction of 3-dehydroshikimate (DHSA) to yield shikimate (SA). The sequence is that of Shikimate dehydrogenase (NADP(+)) from Xanthomonas campestris pv. campestris (strain 8004).